A 456-amino-acid chain; its full sequence is L-seryl-tRNA(Sec) selenium transferase (456 aa).

At Lys288 the chain carries N6-(pyridoxal phosphate)lysine.

Belongs to the SelA family. Requires pyridoxal 5'-phosphate as cofactor.

It localises to the cytoplasm. It carries out the reaction L-seryl-tRNA(Sec) + selenophosphate + H(+) = L-selenocysteinyl-tRNA(Sec) + phosphate. The protein operates within aminoacyl-tRNA biosynthesis; selenocysteinyl-tRNA(Sec) biosynthesis; selenocysteinyl-tRNA(Sec) from L-seryl-tRNA(Sec) (bacterial route): step 1/1. Functionally, converts seryl-tRNA(Sec) to selenocysteinyl-tRNA(Sec) required for selenoprotein biosynthesis. The sequence is that of L-seryl-tRNA(Sec) selenium transferase from Helicobacter hepaticus (strain ATCC 51449 / 3B1).